The chain runs to 429 residues: Serine hydroxymethyltransferase (429 aa).

Residues leucine 128 and 132-134 contribute to the (6S)-5,6,7,8-tetrahydrofolate site; that span reads GHL. Position 237 is an N6-(pyridoxal phosphate)lysine (lysine 237).

The protein belongs to the SHMT family. In terms of assembly, homodimer. It depends on pyridoxal 5'-phosphate as a cofactor.

The protein localises to the cytoplasm. It carries out the reaction (6R)-5,10-methylene-5,6,7,8-tetrahydrofolate + glycine + H2O = (6S)-5,6,7,8-tetrahydrofolate + L-serine. It functions in the pathway one-carbon metabolism; tetrahydrofolate interconversion. Its pathway is amino-acid biosynthesis; glycine biosynthesis; glycine from L-serine: step 1/1. In terms of biological role, catalyzes the reversible interconversion of serine and glycine with tetrahydrofolate (THF) serving as the one-carbon carrier. This reaction serves as the major source of one-carbon groups required for the biosynthesis of purines, thymidylate, methionine, and other important biomolecules. Also exhibits THF-independent aldolase activity toward beta-hydroxyamino acids, producing glycine and aldehydes, via a retro-aldol mechanism. This chain is Serine hydroxymethyltransferase, found in Caulobacter vibrioides (strain ATCC 19089 / CIP 103742 / CB 15) (Caulobacter crescentus).